A 380-amino-acid chain; its full sequence is Alpha-N-acetylneuraminate alpha-2,8-sialyltransferase ST8SIA3 (380 aa).

Topologically, residues 1 to 9 are cytoplasmic; it reads MRNCKMARV. The chain crosses the membrane as a helical; Signal-anchor for type II membrane protein span at residues 10–33; that stretch reads ASVLGLVMLSVALLILSLISYVSL. The Lumenal segment spans residues 34–380; it reads KKENIFTTPK…LTKLTLSHCA (347 aa). N93, N113, and N160 each carry an N-linked (GlcNAc...) asparagine glycan. 2 disulfide bridges follow: C162/C313 and C176/C379. N167 and N190 together coordinate CMP-N-acetyl-beta-neuraminate. N206 carries N-linked (GlcNAc...) asparagine glycosylation. S300, T301, G302, W322, Y336, and H337 together coordinate CMP-N-acetyl-beta-neuraminate. The active-site Proton donor/acceptor is the H354.

This sequence belongs to the glycosyltransferase 29 family. Homodimer. Autopolysialylated. As to expression, expressed in fetal and adult brain and fetal liver.

Its subcellular location is the golgi apparatus membrane. It carries out the reaction [N-acetyl-alpha-D-neuraminosyl-(2-&gt;8)](n) + CMP-N-acetyl-beta-neuraminate = [N-acetyl-alpha-D-neuraminosyl-(2-&gt;8)](n+1) + CMP + H(+). The enzyme catalyses alpha-Neu5Ac-(2-&gt;3)-beta-D-Gal-(1-&gt;4)-6S-D-GlcNAc + CMP-N-acetyl-beta-neuraminate = alpha-Neu5Ac-(2-&gt;8)-alpha-Neu5Ac-(2-&gt;3)-beta-D-Gal-(1-&gt;4)-6S-D-GlcNAc + CMP + H(+). The catalysed reaction is a ganglioside GM3 (d18:1(4E)) + CMP-N-acetyl-beta-neuraminate = a ganglioside GD3 (d18:1(4E)) + CMP + H(+). It catalyses the reaction a ganglioside GM3 + CMP-N-acetyl-beta-neuraminate = a ganglioside GD3 + CMP + H(+). It carries out the reaction an N-acetyl-alpha-neuraminyl-(2-&gt;3)-beta-D-galactosyl derivative + CMP-N-acetyl-beta-neuraminate = an N-acetyl-alpha-neuraminyl-(2-&gt;8)-N-acetyl-alpha-neuraminyl-(2-&gt;3)-beta-D-galactosyl derivative + CMP + H(+). The enzyme catalyses an N-acetyl-alpha-neuraminyl-(2-&gt;3)-beta-D-galactosyl-(1-&gt;4)-N-acetyl-beta-D-glucosaminyl derivative + CMP-N-acetyl-beta-neuraminate = an alpha-Neu5Ac-(2-&gt;8)-alpha-Neu5Ac-(2-&gt;3)-beta-D-Gal-(1-&gt;4)-beta-D-GlcNAc derivative + CMP + H(+). It participates in protein modification; protein glycosylation. Functionally, catalyzes the transfer of sialic acid from a CMP-linked sialic acid donor onto a terminal alpha-2,3-, alpha-2,6-, or alpha-2,8-linked sialic acid of an acceptor, such as N-linked oligosaccharides of glycoproteins and glycolipids through alpha-2,8-linkages. Forms oligosialic and polysialic acid on various sialylated N-acetyllactosamine oligosaccharides of glycoproteins, including FETUB N-glycans, a2-HS-glycoprotein (AHSG) and alpha 2,3-sialylated glycosphingolipids, such as alpha 2,3-sialylparagloboside and ganglioside GM3 and to a lesser extent NCAM1 N-glycans. However, it is much more specific to N-linked oligosaccharides of glycoproteins than glycosphingolipids. 2,3-sialylparagloboside serves as the best acceptor substrate among the glycolipids. alpha-Neu5Ac-(2-&gt;8)-alpha-Neu5Ac-(2-&gt;3)-beta-D-Gal-(1-&gt;4)-6S-D-GlcNAc and monosialyl and disialyl N-acetyllactosamines are the best acceptor substrates among glycoproteins. May plays critical role in the striatum by mediating the formation of disialylated and trisialylated terminal glycotopes on N- and O-glycans of specific striatal proteins, regulating their distribution in lipid rafts, affecting their interaction with other binding partners, and subsequently modulating striatal functions. In Homo sapiens (Human), this protein is Alpha-N-acetylneuraminate alpha-2,8-sialyltransferase ST8SIA3.